Reading from the N-terminus, the 613-residue chain is Lysophospholipase 1 (613 aa).

A signal peptide spans methionine 1 to alanine 21. Positions aspartate 55–aspartate 593 constitute a PLA2c domain. N-linked (GlcNAc...) asparagine glycans are attached at residues asparagine 142, asparagine 173, asparagine 220, asparagine 244, asparagine 281, asparagine 319, asparagine 348, asparagine 365, asparagine 494, asparagine 499, asparagine 523, asparagine 551, and asparagine 572.

It belongs to the lysophospholipase family.

It localises to the secreted. The enzyme catalyses a 1-acyl-sn-glycero-3-phosphocholine + H2O = sn-glycerol 3-phosphocholine + a fatty acid + H(+). In terms of biological role, catalyzes the release of fatty acids from lysophospholipids. Required for survival under high osmolarity, for normal osmotic stress-induced gene expression, and for nutrient-mediated repression of sexual differentiation. The polypeptide is Lysophospholipase 1 (plb1) (Schizosaccharomyces pombe (strain 972 / ATCC 24843) (Fission yeast)).